A 1026-amino-acid polypeptide reads, in one-letter code: Multidrug resistance protein MdtC (1026 aa).

The next 11 membrane-spanning stretches (helical) occupy residues 15–35, 333–353, 360–380, 387–407, 431–451, 463–483, 528–548, 853–873, 897–917, 953–973, and 984–1004; these read ILIAAAITLCGILGFRLLPVA, EVEETLAISVALVIMVVFLFL, LIPAVAVPVSLIGTFAAMYLC, LSLMALTIATGFVVDDAIVVL, VGFTVISMSLSLVAVFLPLLL, FAVTLSVAIGISLVVSLTLTP, LVGVVFLGTVALNIWLYIAIP, LILIVAAIATVYIVLGILYES, LFNAPFSLIALIGIMLLIGIV, PIMMTTLAALFGALPLVLSGG, and ITIVGGLVMSQLLTLYTTPVV.

The protein belongs to the resistance-nodulation-cell division (RND) (TC 2.A.6) family. MdtC subfamily. As to quaternary structure, part of a tripartite efflux system composed of MdtA, MdtB and MdtC. MdtC forms a heteromultimer with MdtB.

The protein localises to the cell inner membrane. This Salmonella paratyphi C (strain RKS4594) protein is Multidrug resistance protein MdtC.